The primary structure comprises 486 residues: UDP-N-acetylmuramoyl-L-alanyl-D-glutamate--2,6-diaminopimelate ligase (486 aa).

S34 lines the UDP-N-acetyl-alpha-D-muramoyl-L-alanyl-D-glutamate pocket. An ATP-binding site is contributed by 112 to 118; the sequence is GTAGKTS. UDP-N-acetyl-alpha-D-muramoyl-L-alanyl-D-glutamate-binding positions include 154–155, S181, Q187, and R189; that span reads TT. K221 is subject to N6-carboxylysine. Meso-2,6-diaminopimelate contacts are provided by residues R385, 409-412, G457, and E461; that span reads DNPR. The Meso-diaminopimelate recognition motif motif lies at 409–412; it reads DNPR.

Belongs to the MurCDEF family. MurE subfamily. It depends on Mg(2+) as a cofactor. Carboxylation is probably crucial for Mg(2+) binding and, consequently, for the gamma-phosphate positioning of ATP.

It localises to the cytoplasm. The catalysed reaction is UDP-N-acetyl-alpha-D-muramoyl-L-alanyl-D-glutamate + meso-2,6-diaminopimelate + ATP = UDP-N-acetyl-alpha-D-muramoyl-L-alanyl-gamma-D-glutamyl-meso-2,6-diaminopimelate + ADP + phosphate + H(+). Its pathway is cell wall biogenesis; peptidoglycan biosynthesis. Its function is as follows. Catalyzes the addition of meso-diaminopimelic acid to the nucleotide precursor UDP-N-acetylmuramoyl-L-alanyl-D-glutamate (UMAG) in the biosynthesis of bacterial cell-wall peptidoglycan. This Rhizobium meliloti (strain 1021) (Ensifer meliloti) protein is UDP-N-acetylmuramoyl-L-alanyl-D-glutamate--2,6-diaminopimelate ligase.